The sequence spans 212 residues: 3-demethoxyubiquinol 3-hydroxylase (212 aa).

The segment at 21–42 (SRMSRPLPVPQESAVTEAAPEL) is disordered. Residues Glu61, Glu91, His94, Glu143, Glu175, and His178 each coordinate Fe cation.

The protein belongs to the COQ7 family. Fe cation is required as a cofactor.

The protein resides in the cell membrane. It carries out the reaction a 5-methoxy-2-methyl-3-(all-trans-polyprenyl)benzene-1,4-diol + AH2 + O2 = a 3-demethylubiquinol + A + H2O. Its pathway is cofactor biosynthesis; ubiquinone biosynthesis. Functionally, catalyzes the hydroxylation of 2-nonaprenyl-3-methyl-6-methoxy-1,4-benzoquinol during ubiquinone biosynthesis. In Paraburkholderia xenovorans (strain LB400), this protein is 3-demethoxyubiquinol 3-hydroxylase.